The primary structure comprises 222 residues: Fibrillarin-like rRNA/tRNA 2'-O-methyltransferase (222 aa).

S-adenosyl-L-methionine is bound by residues 86–87, 104–105, 129–130, and 149–152; these read TT, EV, DA, and DISQ.

It belongs to the methyltransferase superfamily. Fibrillarin family. As to quaternary structure, interacts with nop5. Component of box C/D small ribonucleoprotein (sRNP) particles that contain rpl7ae, FlpA and nop5, plus a guide RNA.

Involved in pre-rRNA and tRNA processing. Utilizes the methyl donor S-adenosyl-L-methionine to catalyze the site-specific 2'-hydroxyl methylation of ribose moieties in rRNA and tRNA. Site specificity is provided by a guide RNA that base pairs with the substrate. Methylation occurs at a characteristic distance from the sequence involved in base pairing with the guide RNA. In Thermoplasma volcanium (strain ATCC 51530 / DSM 4299 / JCM 9571 / NBRC 15438 / GSS1), this protein is Fibrillarin-like rRNA/tRNA 2'-O-methyltransferase.